Consider the following 103-residue polypeptide: UPF0145 protein NT01CX_0170 (103 aa).

It belongs to the UPF0145 family.

In Clostridium novyi (strain NT), this protein is UPF0145 protein NT01CX_0170.